Here is a 375-residue protein sequence, read N- to C-terminus: Peptide chain release factor 1 (375 aa).

Gln237 bears the N5-methylglutamine mark. Over residues 289 to 299 (AAREAQERQER) the composition is skewed to basic and acidic residues. The segment at 289–326 (AAREAQERQERASQVGSGDRSEKIRTYNYPQNRVTDHR) is disordered.

It belongs to the prokaryotic/mitochondrial release factor family. In terms of processing, methylated by PrmC. Methylation increases the termination efficiency of RF1.

It localises to the cytoplasm. Peptide chain release factor 1 directs the termination of translation in response to the peptide chain termination codons UAG and UAA. The chain is Peptide chain release factor 1 (prfA) from Deinococcus radiodurans (strain ATCC 13939 / DSM 20539 / JCM 16871 / CCUG 27074 / LMG 4051 / NBRC 15346 / NCIMB 9279 / VKM B-1422 / R1).